We begin with the raw amino-acid sequence, 160 residues long: Bursicon (160 aa).

Residues 1-20 form the signal peptide; it reads MSVLNTFLVIVALILCYVND. The CTCK domain maps to 38-131; it reads CQECQMTAVI…PLQCMCRPCG (94 aa). 5 disulfide bridges follow: Cys-41-Cys-90, Cys-55-Cys-104, Cys-65-Cys-125, Cys-69-Cys-127, and Cys-87-Cys-130.

Heterodimer of burs and pburs.

The protein resides in the secreted. Functionally, final heterodimeric neurohormone released at the end of the molting cycle, involved in the sclerotization (tanning) of the insect cuticle, melanization and wing spreading. The polypeptide is Bursicon (Bombyx mori (Silk moth)).